Consider the following 276-residue polypeptide: Protease HtpX homolog (276 aa).

A helical membrane pass occupies residues 14–34 (IVLFALIGQALGGTGGMLLAF). Histidine 130 provides a ligand contact to Zn(2+). The active site involves glutamate 131. A Zn(2+)-binding site is contributed by histidine 134. Helical transmembrane passes span 145–165 (VAATLAGAITMLSRFALFFGG) and 171–191 (LVSLLMMILAPMAAMLIQSAI). A Zn(2+)-binding site is contributed by glutamate 196.

The protein belongs to the peptidase M48B family. Requires Zn(2+) as cofactor.

The protein localises to the cell inner membrane. In Salinibacter ruber (strain DSM 13855 / M31), this protein is Protease HtpX homolog.